The sequence spans 59 residues: MDPAKIWWHSCLLSHKSWCNCTEPRNHLPGWPTSEGTSTEDGDIITDAEMLTLAEDTEG.

This is an uncharacterized protein from Torque teno tupaia virus (isolate Tbc-TTV14).